Consider the following 424-residue polypeptide: Light-independent protochlorophyllide reductase subunit N (424 aa).

[4Fe-4S] cluster-binding residues include Cys27, Cys52, and Cys113.

It belongs to the BchN/ChlN family. In terms of assembly, protochlorophyllide reductase is composed of three subunits; BchL, BchN and BchB. Forms a heterotetramer of two BchB and two BchN subunits. It depends on [4Fe-4S] cluster as a cofactor.

It carries out the reaction chlorophyllide a + oxidized 2[4Fe-4S]-[ferredoxin] + 2 ADP + 2 phosphate = protochlorophyllide a + reduced 2[4Fe-4S]-[ferredoxin] + 2 ATP + 2 H2O. The protein operates within porphyrin-containing compound metabolism; bacteriochlorophyll biosynthesis (light-independent). In terms of biological role, component of the dark-operative protochlorophyllide reductase (DPOR) that uses Mg-ATP and reduced ferredoxin to reduce ring D of protochlorophyllide (Pchlide) to form chlorophyllide a (Chlide). This reaction is light-independent. The NB-protein (BchN-BchB) is the catalytic component of the complex. This Halorhodospira halophila (strain DSM 244 / SL1) (Ectothiorhodospira halophila (strain DSM 244 / SL1)) protein is Light-independent protochlorophyllide reductase subunit N.